Consider the following 207-residue polypeptide: Large ribosomal subunit protein uL3 (207 aa).

Belongs to the universal ribosomal protein uL3 family. Part of the 50S ribosomal subunit. Forms a cluster with proteins L14 and L19.

One of the primary rRNA binding proteins, it binds directly near the 3'-end of the 23S rRNA, where it nucleates assembly of the 50S subunit. This chain is Large ribosomal subunit protein uL3, found in Desulforapulum autotrophicum (strain ATCC 43914 / DSM 3382 / VKM B-1955 / HRM2) (Desulfobacterium autotrophicum).